A 511-amino-acid chain; its full sequence is Lysine--tRNA ligase 2 (511 aa).

Residues 1–22 (MTMEINNTDPFEKMPLPDDSGL) are disordered. The Mg(2+) site is built by E421 and E428.

It belongs to the class-II aminoacyl-tRNA synthetase family. In terms of assembly, homodimer. It depends on Mg(2+) as a cofactor.

Its subcellular location is the cytoplasm. It carries out the reaction tRNA(Lys) + L-lysine + ATP = L-lysyl-tRNA(Lys) + AMP + diphosphate. This chain is Lysine--tRNA ligase 2, found in Methanosarcina mazei (strain ATCC BAA-159 / DSM 3647 / Goe1 / Go1 / JCM 11833 / OCM 88) (Methanosarcina frisia).